The primary structure comprises 264 residues: Thymidylate synthase (264 aa).

Arg21 lines the dUMP pocket. His51 is a (6R)-5,10-methylene-5,6,7,8-tetrahydrofolate binding site. Residue 126-127 (RR) coordinates dUMP. The Nucleophile role is filled by Cys146. DUMP is bound by residues 166 to 169 (RSAD), Asn177, and 207 to 209 (HIY). Asp169 serves as a coordination point for (6R)-5,10-methylene-5,6,7,8-tetrahydrofolate. A (6R)-5,10-methylene-5,6,7,8-tetrahydrofolate-binding site is contributed by Ala263.

It belongs to the thymidylate synthase family. Bacterial-type ThyA subfamily. Homodimer.

It is found in the cytoplasm. The catalysed reaction is dUMP + (6R)-5,10-methylene-5,6,7,8-tetrahydrofolate = 7,8-dihydrofolate + dTMP. Its pathway is pyrimidine metabolism; dTTP biosynthesis. Its function is as follows. Catalyzes the reductive methylation of 2'-deoxyuridine-5'-monophosphate (dUMP) to 2'-deoxythymidine-5'-monophosphate (dTMP) while utilizing 5,10-methylenetetrahydrofolate (mTHF) as the methyl donor and reductant in the reaction, yielding dihydrofolate (DHF) as a by-product. This enzymatic reaction provides an intracellular de novo source of dTMP, an essential precursor for DNA biosynthesis. The chain is Thymidylate synthase from Coxiella burnetii (strain Dugway 5J108-111).